Reading from the N-terminus, the 979-residue chain is Glutamate receptor ionotropic, kainate 5 (979 aa).

The first 14 residues, 1 to 14, serve as a signal peptide directing secretion; it reads MPAELLLLLIVAFA. Residues 15-544 are Extracellular-facing; it reads NPSCQVLSSL…YFSFLDPFSP (530 aa). 3 disulfides stabilise this stretch: Cys36/Cys292, Cys83/Cys334, and Cys165/Cys170. Asn219, Asn271, Asn285, Asn322, Asn372, Asn394, Asn400, Asn407, Asn414, and Asn478 each carry an N-linked (GlcNAc...) asparagine glycan. A helical transmembrane segment spans residues 545–565; the sequence is AVWLFMLLAYLAVSCVLFLAA. Over 566-622 the chain is Cytoplasmic; the sequence is RLSPYEWYNPHPCLRARPHILENQYTLGNSLWFPVGGFMQQGSEIMPRALSTRCVSG. Residues 623-643 form a helical membrane-spanning segment; it reads VWWAFTLIIISSYTANLAAFL. The Extracellular segment spans residues 644–803; the sequence is TVQRMEVPVE…HRAKGLGMEN (160 aa). A glycan (N-linked (GlcNAc...) asparagine) is linked at Asn735. A helical transmembrane segment spans residues 804 to 824; it reads IGGIFVVLICGLIIAVFVAVM. Topologically, residues 825–979 are cytoplasmic; it reads EFIWSTRRSA…TGPRELTEHE (155 aa). The span at 856 to 867 shows a compositional bias: basic residues; the sequence is RKTSRSRRRRRP. Disordered regions lie at residues 856–875, 890–925, and 942–979; these read RKTSRSRRRRRPGGPSRALL, LYSAGAGGDAGAHGGPQRLLDDPGPPGGPRPQAPTP, and RASGAGAPPRGLGTPAEATSPPRPRPGPTGPRELTEHE. Residues 894-903 are compositionally biased toward gly residues; sequence GAGGDAGAHG. Residues 912-923 are compositionally biased toward pro residues; sequence PGPPGGPRPQAP.

The protein belongs to the glutamate-gated ion channel (TC 1.A.10.1) family. GRIK5 subfamily. As to quaternary structure, homotetramer. Heterotetramer with GRIK2. Can form functional heteromeric receptors with GRIK1, GRIK2 and GRIK3. Forms a heteromeric complex with GRIK2. As to expression, expressed in the hippocampal mossy fiber synapses (at protein level).

The protein localises to the cell membrane. Its subcellular location is the postsynaptic cell membrane. The protein resides in the presynaptic cell membrane. Functionally, ionotropic glutamate receptor that functions as a cation-permeable ligand-gated ion channel, gated by L-glutamate and the glutamatergic agonist kainic acid. Cannot form functional channels on its own and produces channel activity only in heteromeric assembly with GRIK2 subunit. Can form functional heteromeric receptors with GRIK1 and GRIK3. The chain is Glutamate receptor ionotropic, kainate 5 (Grik5) from Mus musculus (Mouse).